Reading from the N-terminus, the 340-residue chain is Nesprin-4 (340 aa).

2 disordered regions span residues 1-86 (MAQF…DGGK) and 254-277 (HRRRLQKPQDKKRQGPPSLPDAML). At 1–291 (MAQFPLLGHG…GVPAPASRRP (291 aa)) the chain is on the cytoplasmic side. Over residues 53-63 (APEHFMDEPKS) the composition is skewed to basic and acidic residues. The KASH domain maps to 283 to 340 (VPAPASRRPLTFLLLLLFLLLVGATLLLPLSGVPCCSHTRLARTPYLVLSYVNGLPPI). A helical; Anchor for type IV membrane protein membrane pass occupies residues 292–312 (LTFLLLLLFLLLVGATLLLPL). The Perinuclear space portion of the chain corresponds to 313-340 (SGVPCCSHTRLARTPYLVLSYVNGLPPI).

This sequence belongs to the nesprin family. In terms of assembly, core component of LINC complexes which are composed of inner nuclear membrane SUN domain-containing proteins coupled to outer nuclear membrane KASH domain-containing nesprins. SUN and KASH domain-containing proteins seem to bind each other promiscuously; however, differentially expression of LINC complex constituents can give rise to specific assemblies. Probably part of a SUN1-containing LINC complex. Interacts with kinesins KIF5B and KLC1.

It is found in the nucleus outer membrane. Its function is as follows. As a component of the LINC (LInker of Nucleoskeleton and Cytoskeleton) complex, involved in the connection between the nuclear lamina and the cytoskeleton. The nucleocytoplasmic interactions established by the LINC complex play an important role in the transmission of mechanical forces across the nuclear envelope and in nuclear movement and positioning. Behaves as a kinesin cargo, providing a functional binding site for kinesin-1 at the nuclear envelope. Hence may contribute to the establishment of secretory epithelial morphology, by promoting kinesin-dependent apical migration of the centrosome and Golgi apparatus and basal localization of the nucleus. The protein is Nesprin-4 (Syne4) of Rattus norvegicus (Rat).